We begin with the raw amino-acid sequence, 629 residues long: MEHITTPKVENVKLLDRYTNRKAASGTLYLTATHLIYVDASAEVRKETWILHHHIATVEKLPLTTAGCPLLIHCKNFHVAHFVIGQERDCHEVYTSLLKLSQPVKPEELYAFSYNPKMSKDNREIGWKLIDLKVDYQRMGIPNDYWEITDLNKDYEVCNTYPPEIVVPRAASKATVIGSSRFRSRGRIPVLSYLYKENNAAICRCSQPLSGFSARCLEDEQMLQAIREANPGSPFMYVVDTRPKLNAMANRAAGKGYENEDNYDNIRFKFIGIENIHVMRSSLQKLLEVCETKSPSMSDFLTGLENSGWLRHIKAVMDASVFLAKAVKDEKASVLVHCSDGWDRTAQVCSLASLLLDPFYRAFKGFMVLIEKEWIAMGHKFSHRCGHLDGDPKEVSPVFTQFIECVWQLMQQFPCTFEFNEHFLLEIHDHVYSCQFGNFLGTCHKEREDLKIFEKTHSLWPFLLQKKQELRNPLYRGFTAYKELQPNTLPFSFQFWCGMYNRFDKGMHPKQCVLDHLLSCMNQKIKLEDNASELENKLPFLDGPLPNEACFLSKVGCAASKTPMLNTPQDYEGEAPPVLTNGISVGDINVTSDVDQRNKENLANHRDLHLNDSVDVLNSEAKDGKPQHH.

Residues 126–500 (GWKLIDLKVD…FSFQFWCGMY (375 aa)) form the Myotubularin phosphatase domain. A 1,2-diacyl-sn-glycero-3-phospho-(1D-myo-inositol-3,5-bisphosphate) contacts are provided by Asn250, Asn275, and Ile276. Residues Asn250, Asn275, and Ile276 each contribute to the a 1,2-diacyl-sn-glycero-3-phospho-(1D-myo-inositol-3-phosphate) site. Residue Cys338 is the Phosphocysteine intermediate of the active site. Positions 339, 340, 341, 342, 343, 344, 380, and 384 each coordinate a 1,2-diacyl-sn-glycero-3-phospho-(1D-myo-inositol-3,5-bisphosphate). Residues Ser339, Asp340, Gly341, Trp342, Asp343, and Arg344 each coordinate a 1,2-diacyl-sn-glycero-3-phospho-(1D-myo-inositol-3-phosphate). Phosphate is bound by residues Ser339 and Asp340. Phosphate contacts are provided by Trp342, Asp343, and Arg344. Arg384 lines the a 1,2-diacyl-sn-glycero-3-phospho-(1D-myo-inositol-3-phosphate) pocket. The stretch at 517–543 (LLSCMNQKIKLEDNASELENKLPFLDG) forms a coiled coil.

This sequence belongs to the protein-tyrosine phosphatase family. Non-receptor class myotubularin subfamily. In terms of assembly, homodimer.

The protein localises to the nucleus envelope. The catalysed reaction is a 1,2-diacyl-sn-glycero-3-phospho-(1D-myo-inositol-3,5-bisphosphate) + H2O = a 1,2-diacyl-sn-glycero-3-phospho-(1D-myo-inositol-5-phosphate) + phosphate. It catalyses the reaction a 1,2-diacyl-sn-glycero-3-phospho-(1D-myo-inositol-3-phosphate) + H2O = a 1,2-diacyl-sn-glycero-3-phospho-(1D-myo-inositol) + phosphate. The enzyme catalyses 1,2-dioctanoyl-sn-glycero-3-phospho-(1D-myo-inositol-3,5-bisphosphate) + H2O = 1,2-dioctanoyl-sn-glycero-3-phospho-(1D-myo-inositol-5-phosphate) + phosphate. Its function is as follows. Lipid phosphatase that specifically dephosphorylates the D-3 position of phosphatidylinositol 3-phosphate and phosphatidylinositol 3,5-bisphosphate, generating phosphatidylinositol and phosphatidylinositol 5-phosphate. The sequence is that of Phosphatidylinositol-3,5-bisphosphate 3-phosphatase MTMR8 from Gallus gallus (Chicken).